The chain runs to 455 residues: MSIVTVQLGQCGNQIGFEVFDALFRDSHCSQGLCSKRDNEAYQASCRERFFREEENGVPVARAVLVDMEPKVINQTLSKAAQSGRWNYGQHTSFCQKQGSGNNWAYGYSVHGPKHEESIMNLIQTEVEKCDSLSGFFIIMSMAGGTGSGLGAFVTQKLQDQYSSSLKMNQIIWPYGTGEVIVQNYNSILTLSHLYRSSDALLIHENDAVHKICAKRMNIKQISFRDLNQVLAHQLGSVFQPTYSEDSSFHYRRNPLGDLMEHLVPHPEFKMLGVRNIPQMSAASLAYSAFTWAGLLKHLRQMLISSAKMEEGINWQVRPPLTGLPPIGKASAHKEHHFNTSLANLVVLRGREVHSADVEGFKDPALYTSWLEPVDAFSVWKTQRAFDKYEKSAALVSNSQLLVKPLDMIVGKAWNMFSSKAFIHQYTKFGMEEEDFLDSFALLEQVVASYGSLGP.

A GTP-binding site is contributed by 143-149 (AGGTGSG).

The protein belongs to the tubulin family. Found in a complex with TEDC1, TEDC2, TUBE1 and TUBD1. As to expression, highly expressed in testis.

The protein resides in the cell projection. Its subcellular location is the cilium. It localises to the cytoplasm. The protein localises to the cytoskeleton. It is found in the microtubule organizing center. The protein resides in the centrosome. Its subcellular location is the centriole. It localises to the nucleus. Its function is as follows. Acts as a positive regulator of hedgehog signaling and regulates ciliary function. This Mus musculus (Mouse) protein is Tubulin delta chain (Tubd1).